The chain runs to 288 residues: Syntaxin-1A (288 aa).

The span at 1–13 (MKDRTQELRTAKD) shows a compositional bias: basic and acidic residues. A disordered region spans residues 1–20 (MKDRTQELRTAKDSDDDDDV). Over 1 to 265 (MKDRTQELRT…KYQSKARRKK (265 aa)) the chain is Cytoplasmic. Phosphoserine is present on residues Ser-14, Ser-64, and Ser-95. Residues 68–109 (DEKTKEELEELMSDIKKTANKVRSKLKSIEQSIEQEEGLNRS) are a coiled coil. Position 188 is a phosphoserine; by DAPK1 (Ser-188). Residues 192-254 (LSEIETRHSE…ERAVSDTKKA (63 aa)) enclose the t-SNARE coiled-coil homology domain. Residues Lys-252, Lys-253, and Lys-256 each participate in a glycyl lysine isopeptide (Lys-Gly) (interchain with G-Cter in SUMO) cross-link. A helical; Anchor for type IV membrane protein transmembrane segment spans residues 266-286 (IMIIICCVILGIIIASTIGGI). Topologically, residues 287 to 288 (FG) are extracellular.

The protein belongs to the syntaxin family. Part of the SNARE core complex containing SNAP25, VAMP2 and STX1A; this complex constitutes the basic catalytic machinery of the complex neurotransmitter release apparatus. The SNARE complex interacts with CPLX1. Interacts with STXBP1. The interaction with STXBP1 promotes assembly of the SNARE complex. Interacts (via C-terminus) with KCNB1 (via C-terminus); the interaction increases in a calcium-dependent manner and induces a pore-independent enhancement of exocytosis in neuroendocrine cells, chromaffin cells, pancreatic beta cells and from the soma of dorsal root ganglia (DRG) neurons. Interacts with SYTL4. Interacts with STXBP6. Interacts with PLCL1 (via C2 domain). Interacts with OTOF. Interacts with LGI3. Interacts (via the H3 domain) with SLC6A4 (via the N-terminus); this interaction regulates SLC4A6 channel conductance in thalamocortical neurons. Interacts with SYT6 and SYT8; the interaction is Ca(2+)-dependent. Interacts with VAMP8. Interacts with SNAP23. Interacts with VAPA and SYBU. Interacts with PRRT2. Interacts with SEPT8. Interacts with STXBP5L. Interacts with synaptotagmin-1/SYT1. Interacts with SEPTIN5; in the cerebellar cortex. Interacts with SEPTIN4; in the striatum. Post-translationally, phosphorylated by CK2. Phosphorylation at Ser-188 by DAPK1 significantly decreases its interaction with STXBP1. Phosphorylated by CK2. Phosphorylation at Ser-188 by DAPK1 significantly decreases its interaction with STXBP1. In terms of processing, sumoylated, sumoylation is required for regulation of synaptic vesicle endocytosis. Expressed in the striatum (at protein level). Expressed in the ileum.

The protein localises to the cytoplasmic vesicle. It localises to the secretory vesicle. Its subcellular location is the synaptic vesicle membrane. The protein resides in the synapse. It is found in the synaptosome. The protein localises to the cell membrane. Functionally, plays an essential role in hormone and neurotransmitter calcium-dependent exocytosis and endocytosis. Part of the SNARE (Soluble NSF Attachment Receptor) complex composed of SNAP25, STX1A and VAMP2 which mediates the fusion of synaptic vesicles with the presynaptic plasma membrane. STX1A and SNAP25 are localized on the plasma membrane while VAMP2 resides in synaptic vesicles. The pairing of the three SNAREs from the N-terminal SNARE motifs to the C-terminal anchors leads to the formation of the SNARE complex, which brings membranes into close proximity and results in final fusion. Participates in the calcium-dependent regulation of acrosomal exocytosis in sperm. Also plays an important role in the exocytosis of hormones such as insulin or glucagon-like peptide 1 (GLP-1). This is Syntaxin-1A (Stx1a) from Mus musculus (Mouse).